A 183-amino-acid chain; its full sequence is MECLQQDTGVEAEQVQVQQQEENAVPVTSQRVSITQAAKLHNVTRQAIYVAIKQKKLKASKTTRWEIDLQDLEDYRRNRYSRAKSTYQGELLFDNEKGFYSVGQVASMLDVPEQKIYYATRIGAMKGERRGSAWVIHVSEVDRYRNDYLKKEAERKGKSLAAMREGFEALGADLLADAENFIS.

The protein belongs to the EUO family.

This is an uncharacterized protein from Chlamydia trachomatis serovar D (strain ATCC VR-885 / DSM 19411 / UW-3/Cx).